Reading from the N-terminus, the 334-residue chain is GTP 3',8-cyclase (334 aa).

The Radical SAM core domain maps to Gly-11 to Ala-236. Residue Arg-20 participates in GTP binding. Cys-27 and Cys-31 together coordinate [4Fe-4S] cluster. Tyr-33 contacts S-adenosyl-L-methionine. Cys-34 provides a ligand contact to [4Fe-4S] cluster. GTP is bound at residue Arg-69. Gly-73 lines the S-adenosyl-L-methionine pocket. Residue Thr-100 participates in GTP binding. Ser-124 lines the S-adenosyl-L-methionine pocket. Lys-161 is a binding site for GTP. S-adenosyl-L-methionine is bound at residue Met-195. [4Fe-4S] cluster is bound by residues Cys-260 and Cys-263. Residue Arg-265–Arg-267 participates in GTP binding. Cys-277 lines the [4Fe-4S] cluster pocket.

Belongs to the radical SAM superfamily. MoaA family. In terms of assembly, monomer and homodimer. The cofactor is [4Fe-4S] cluster.

It catalyses the reaction GTP + AH2 + S-adenosyl-L-methionine = (8S)-3',8-cyclo-7,8-dihydroguanosine 5'-triphosphate + 5'-deoxyadenosine + L-methionine + A + H(+). The protein operates within cofactor biosynthesis; molybdopterin biosynthesis. Functionally, catalyzes the cyclization of GTP to (8S)-3',8-cyclo-7,8-dihydroguanosine 5'-triphosphate. In Pseudomonas putida (strain GB-1), this protein is GTP 3',8-cyclase.